The primary structure comprises 175 residues: Ribosome maturation factor RimM (175 aa).

The region spanning Glu-97–Phe-175 is the PRC barrel domain.

Belongs to the RimM family. As to quaternary structure, binds ribosomal protein uS19.

The protein resides in the cytoplasm. Its function is as follows. An accessory protein needed during the final step in the assembly of 30S ribosomal subunit, possibly for assembly of the head region. Essential for efficient processing of 16S rRNA. May be needed both before and after RbfA during the maturation of 16S rRNA. It has affinity for free ribosomal 30S subunits but not for 70S ribosomes. The protein is Ribosome maturation factor RimM of Marinobacter nauticus (strain ATCC 700491 / DSM 11845 / VT8) (Marinobacter aquaeolei).